The sequence spans 203 residues: Auxin-induced protein 22E (203 aa).

An EAR-like (transcriptional repression) motif is present at residues 15–19 (LRLGL). A disordered region spans residues 15–77 (LRLGLPGSDE…DHNEDSVQPA (63 aa)). Basic and acidic residues predominate over residues 43-52 (SSPELEESRC). A compositionally biased stretch (low complexity) spans 58 to 67 (SDSSDSTTTS). One can recognise a PB1 domain in the interval 107–199 (GMYLKVSMAG…RIIKGSEAKG (93 aa)).

The protein belongs to the Aux/IAA family. As to quaternary structure, homodimers and heterodimers.

The protein resides in the nucleus. In terms of biological role, aux/IAA proteins are short-lived transcriptional factors that function as repressors of early auxin response genes at low auxin concentrations. Repression is thought to result from the interaction with auxin response factors (ARFs), proteins that bind to the auxin-responsive promoter element (AuxRE). Formation of heterodimers with ARF proteins may alter their ability to modulate early auxin response genes expression. This chain is Auxin-induced protein 22E (AUX22E), found in Vigna radiata var. radiata (Mung bean).